The chain runs to 325 residues: Homeobox protein Hox-A1a (325 aa).

An Antp-type hexapeptide motif is present at residues 187–192; sequence TFDWMK. Disordered regions lie at residues 194–215 and 264–325; these read KRNP…PNTV and RMKQ…YPSN. A DNA-binding region (homeobox) is located at residues 212–271; sequence PNTVRTNFTTKQLTELEKEFHFNKYLTRARRVEIAAALQLNETQVKIWFQNRRMKQKKRE. The span at 285 to 300 shows a compositional bias: basic and acidic residues; that stretch reads SGERNQEKVEDGESEK. A compositionally biased stretch (low complexity) spans 301–317; that stretch reads SVSAPSTPSPTSSTVSS.

This sequence belongs to the Antp homeobox family. Labial subfamily.

Its subcellular location is the nucleus. Its function is as follows. Sequence-specific transcription factor which is part of a developmental regulatory system that provides cells with specific positional identities on the anterior-posterior axis. In Takifugu rubripes (Japanese pufferfish), this protein is Homeobox protein Hox-A1a (hoxa1a).